A 327-amino-acid chain; its full sequence is Phenylalanine--tRNA ligase alpha subunit (327 aa).

Residue glutamate 252 coordinates Mg(2+).

It belongs to the class-II aminoacyl-tRNA synthetase family. Phe-tRNA synthetase alpha subunit type 1 subfamily. In terms of assembly, tetramer of two alpha and two beta subunits. Mg(2+) is required as a cofactor.

It is found in the cytoplasm. The catalysed reaction is tRNA(Phe) + L-phenylalanine + ATP = L-phenylalanyl-tRNA(Phe) + AMP + diphosphate + H(+). In Shigella sonnei (strain Ss046), this protein is Phenylalanine--tRNA ligase alpha subunit.